Reading from the N-terminus, the 232-residue chain is Ribonuclease 3 (232 aa).

An RNase III domain is found at 5–134; it reads QTVLKNHFAI…FLGALLLDKD (130 aa). Glu47 provides a ligand contact to Mg(2+). Asp51 is a catalytic residue. Positions 120 and 123 each coordinate Mg(2+). Glu123 is an active-site residue. In terms of domain architecture, DRBM spans 160–229; that stretch reads DYKTHLQELL…AKNAVEKGLD (70 aa).

This sequence belongs to the ribonuclease III family. In terms of assembly, homodimer. Requires Mg(2+) as cofactor.

The protein localises to the cytoplasm. It carries out the reaction Endonucleolytic cleavage to 5'-phosphomonoester.. Its function is as follows. Digests double-stranded RNA. Involved in the processing of primary rRNA transcript to yield the immediate precursors to the large and small rRNAs (23S and 16S). Processes some mRNAs, and tRNAs when they are encoded in the rRNA operon. Processes pre-crRNA and tracrRNA of type II CRISPR loci if present in the organism. In Streptococcus pneumoniae (strain P1031), this protein is Ribonuclease 3.